The sequence spans 54 residues: Large ribosomal subunit protein bL33 (54 aa).

Belongs to the bacterial ribosomal protein bL33 family.

This Chloroflexus aurantiacus (strain ATCC 29366 / DSM 635 / J-10-fl) protein is Large ribosomal subunit protein bL33.